Here is a 304-residue protein sequence, read N- to C-terminus: MTEQVRIEPVIDYLTGLQDRICQGIAGADGSGEFKEDSWTREEGGGGRSRVLTEGAVFEQAGINFSHVTGASLPPSATAHRPELAGRRFQATGVSLVIHPRNPYVPTSHANVRFFIAEKEGAEPIWWFGGGFDLTPYYGEDEDCVHWHRVAKAACEPFGPEVYPRYKQWCDEYFFLRHRNEPRGVGGLFFDDLNEWGFEKSFAFMRSVGDHYLDAYLPIVARRKDTPYGERERDFQLYRRGRYVEFNLVYDRGTLFGLQSGGRTESILMSLPPLVRWRYNWQPEPGTPEARLYEHFLKPREWVE.

Serine 95 lines the substrate pocket. The a divalent metal cation site is built by histidine 99 and histidine 109. The active-site Proton donor is histidine 109. 111–113 (NVR) is a binding site for substrate. A divalent metal cation is bound by residues histidine 148 and histidine 178. The interval 243–278 (YVEFNLVYDRGTLFGLQSGGRTESILMSLPPLVRWR) is important for dimerization. 261–263 (GGR) contributes to the substrate binding site.

Belongs to the aerobic coproporphyrinogen-III oxidase family. As to quaternary structure, homodimer. The cofactor is a divalent metal cation.

The protein resides in the cytoplasm. It catalyses the reaction coproporphyrinogen III + O2 + 2 H(+) = protoporphyrinogen IX + 2 CO2 + 2 H2O. The protein operates within porphyrin-containing compound metabolism; protoporphyrin-IX biosynthesis; protoporphyrinogen-IX from coproporphyrinogen-III (O2 route): step 1/1. In terms of biological role, involved in the heme biosynthesis. Catalyzes the aerobic oxidative decarboxylation of propionate groups of rings A and B of coproporphyrinogen-III to yield the vinyl groups in protoporphyrinogen-IX. This is Oxygen-dependent coproporphyrinogen-III oxidase from Thioalkalivibrio sulfidiphilus (strain HL-EbGR7).